The chain runs to 225 residues: Uridylate kinase (225 aa).

Gly-9–Ser-10 contacts ATP. Gly-44 serves as a coordination point for UMP. Gly-45 and Arg-49 together coordinate ATP. Residues Asp-66 and Thr-114–Thr-120 each bind UMP. Residues Thr-140, Asn-141, Tyr-146, and Asp-149 each coordinate ATP.

Belongs to the UMP kinase family. Homohexamer.

It is found in the cytoplasm. It carries out the reaction UMP + ATP = UDP + ADP. It functions in the pathway pyrimidine metabolism; CTP biosynthesis via de novo pathway; UDP from UMP (UMPK route): step 1/1. Its activity is regulated as follows. Inhibited by UTP. In terms of biological role, catalyzes the reversible phosphorylation of UMP to UDP. This chain is Uridylate kinase, found in Thermococcus sibiricus (strain DSM 12597 / MM 739).